We begin with the raw amino-acid sequence, 234 residues long: Urease accessory protein UreF (234 aa).

It belongs to the UreF family. As to quaternary structure, ureD, UreF and UreG form a complex that acts as a GTP-hydrolysis-dependent molecular chaperone, activating the urease apoprotein by helping to assemble the nickel containing metallocenter of UreC. The UreE protein probably delivers the nickel.

Its subcellular location is the cytoplasm. Required for maturation of urease via the functional incorporation of the urease nickel metallocenter. The protein is Urease accessory protein UreF of Azoarcus sp. (strain BH72).